Consider the following 216-residue polypeptide: Thymidine kinase (216 aa).

Residues Gly-9–Ser-16 and Asp-86–Gln-89 contribute to the ATP site. The active-site Proton acceptor is the Glu-87.

It belongs to the thymidine kinase family. As to quaternary structure, homotetramer.

It is found in the cytoplasm. It catalyses the reaction thymidine + ATP = dTMP + ADP + H(+). This chain is Thymidine kinase, found in Streptomyces coelicolor (strain ATCC BAA-471 / A3(2) / M145).